A 560-amino-acid chain; its full sequence is Serine/threonine-protein kinase TOS3 (560 aa).

Residues 50 to 344 form the Protein kinase domain; it reads FEILATLGNG…LADIKVHPFM (295 aa). ATP contacts are provided by residues 56-64 and K79; that span reads LGNGQYGKV. D189 serves as the catalytic Proton acceptor.

Belongs to the protein kinase superfamily. Ser/Thr protein kinase family. Autophosphorylated.

It carries out the reaction L-seryl-[protein] + ATP = O-phospho-L-seryl-[protein] + ADP + H(+). It catalyses the reaction L-threonyl-[protein] + ATP = O-phospho-L-threonyl-[protein] + ADP + H(+). In terms of biological role, one of the three SNF1 protein kinases (with SAK1 and ELM1) which are required for growth on nonfermentable carbon sources and nonpreferred sugars and for response to environmental stress. Activates SNF1 by phosphorylation of its activation-loop 'Thr-210'. Required for the regulation by SNF1 of the transcription of a large set of genes, the modification the activity of metabolic enzymes, and the control of various nutrient-responsive cellular developmental processes. Also phosphorylates GAL83, MIG1 and SIP2. This chain is Serine/threonine-protein kinase TOS3 (TOS3), found in Saccharomyces cerevisiae (strain ATCC 204508 / S288c) (Baker's yeast).